Here is a 367-residue protein sequence, read N- to C-terminus: Probable alcohol dehydrogenase adh (367 aa).

Residues cysteine 43, histidine 64, cysteine 97, cysteine 100, cysteine 103, cysteine 111, and asparagine 163 each coordinate Zn(2+).

This sequence belongs to the zinc-containing alcohol dehydrogenase family. It depends on Zn(2+) as a cofactor.

The enzyme catalyses a primary alcohol + NAD(+) = an aldehyde + NADH + H(+). It catalyses the reaction a secondary alcohol + NAD(+) = a ketone + NADH + H(+). This is Probable alcohol dehydrogenase adh (adh) from Mycobacterium tuberculosis (strain CDC 1551 / Oshkosh).